A 290-amino-acid chain; its full sequence is uncharacterized protein (290 aa).

NAD(+) contacts are provided by residues 7 to 21 (AVFG…MAQN) and Thr100. Lys175 is a catalytic residue. Lys243 is an NAD(+) binding site.

It belongs to the HIBADH-related family.

This is an uncharacterized protein from Synechocystis sp. (strain ATCC 27184 / PCC 6803 / Kazusa).